Here is a 62-residue protein sequence, read N- to C-terminus: Beta-defensin 37 (62 aa).

The first 16 residues, 1–16 (MKFSYFLLLLLSLSNF), serve as a signal peptide directing secretion. 3 cysteine pairs are disulfide-bonded: cysteine 29/cysteine 58, cysteine 36/cysteine 51, and cysteine 41/cysteine 59.

It belongs to the beta-defensin family. Only expressed in epididymis (corpus and cauda).

Its subcellular location is the secreted. Has antibacterial activity. In Mus musculus (Mouse), this protein is Beta-defensin 37 (Defb37).